The chain runs to 193 residues: Large ribosomal subunit protein bL9 (193 aa).

The disordered stretch occupies residues 155 to 193 (AEGETLTSAEAIYDIQEKPLAENQEEMNDNDANSINEQA). A compositionally biased stretch (polar residues) spans 184 to 193 (NDANSINEQA).

The protein belongs to the bacterial ribosomal protein bL9 family.

Its function is as follows. Binds to the 23S rRNA. In Bartonella quintana (strain Toulouse) (Rochalimaea quintana), this protein is Large ribosomal subunit protein bL9.